We begin with the raw amino-acid sequence, 600 residues long: ATP-dependent lipid A-core flippase (600 aa).

The next 5 membrane-spanning stretches (helical) occupy residues 28 to 48 (IMAVLGLITYGAVDAAFIAFI), 80 to 100 (IMLMAPIAVILMFSLRGVANF), 182 to 202 (WKLSLCILVIGPIMGVVISVV), 267 to 287 (ISQPLIMVIGSFALAFVLYAA), and 295 to 315 (DLTAGTFAAILGAMLAMLQPI). Residues 28–327 (IMAVLGLITY…LTRVNAEFQR (300 aa)) enclose the ABC transmembrane type-1 domain. An ABC transporter domain is found at 359–596 (LAFDNVTFAY…AGIYANLYQM (238 aa)). 393–400 (GRSGSGKS) contacts ATP.

The protein belongs to the ABC transporter superfamily. Lipid exporter (TC 3.A.1.106) family. Homodimer.

It is found in the cell inner membrane. It carries out the reaction ATP + H2O + lipid A-core oligosaccharideSide 1 = ADP + phosphate + lipid A-core oligosaccharideSide 2.. Functionally, involved in lipopolysaccharide (LPS) biosynthesis. Translocates lipid A-core from the inner to the outer leaflet of the inner membrane. Transmembrane domains (TMD) form a pore in the inner membrane and the ATP-binding domain (NBD) is responsible for energy generation. The protein is ATP-dependent lipid A-core flippase of Shewanella frigidimarina (strain NCIMB 400).